The following is a 372-amino-acid chain: Embryonic growth/differentiation factor 1 (372 aa).

The first 29 residues, 1–29 (MPPPQQGPCGHHLLLLLALLLPSLPLTRA), serve as a signal peptide directing secretion. The propeptide occupies 30-253 (PVPPGPAAAL…LCHPLARPRR (224 aa)). Positions 67-86 (RRRDPQETRSGSRRTSPGVT) are disordered. N206 carries N-linked (GlcNAc...) asparagine glycosylation. 3 disulfide bridges follow: C267–C337, C296–C369, and C300–C371.

This sequence belongs to the TGF-beta family. Homodimer; disulfide-linked. As to expression, expressed in the brain.

It localises to the secreted. In terms of biological role, may mediate cell differentiation events during embryonic development. The polypeptide is Embryonic growth/differentiation factor 1 (GDF1) (Homo sapiens (Human)).